Consider the following 330-residue polypeptide: Growth hormone-regulated TBC protein 6 (330 aa).

Positions 78 to 256 constitute a Rab-GAP TBC domain; that stretch reads GIPHTFRKEL…RLWDCLIYEG (179 aa).

This Caenorhabditis elegans protein is Growth hormone-regulated TBC protein 6 (tbc-6).